The chain runs to 694 residues: Elongation factor G 2 (694 aa).

The tr-type G domain maps to 5–280; sequence SKYRNIGIFA…AVVDYLPSPT (276 aa). Residues 14-21, 78-82, and 132-135 contribute to the GTP site; these read AHVDAGKT, DTPGH, and NKLD.

It belongs to the TRAFAC class translation factor GTPase superfamily. Classic translation factor GTPase family. EF-G/EF-2 subfamily.

It is found in the cytoplasm. In terms of biological role, catalyzes the GTP-dependent ribosomal translocation step during translation elongation. During this step, the ribosome changes from the pre-translocational (PRE) to the post-translocational (POST) state as the newly formed A-site-bound peptidyl-tRNA and P-site-bound deacylated tRNA move to the P and E sites, respectively. Catalyzes the coordinated movement of the two tRNA molecules, the mRNA and conformational changes in the ribosome. The polypeptide is Elongation factor G 2 (Pseudoalteromonas translucida (strain TAC 125)).